Here is a 172-residue protein sequence, read N- to C-terminus: Small ribosomal subunit protein uS5c (172 aa).

The S5 DRBM domain occupies 15–78 (WEEKVVQVKR…TDAKKHIINV (64 aa)).

This sequence belongs to the universal ribosomal protein uS5 family. Part of the 30S ribosomal subunit. Contacts protein S4.

The protein localises to the plastid. It localises to the chloroplast. Functionally, with S4 and S12 plays an important role in translational accuracy. This Gracilaria tenuistipitata var. liui (Red alga) protein is Small ribosomal subunit protein uS5c (rps5).